We begin with the raw amino-acid sequence, 419 residues long: Carboxypeptidase A1 (419 aa).

Positions 1 to 16 (MQGLLILSVLLGAALG) are cleaved as a signal peptide. Residues 17–110 (KEDFVGHQVL…QEQMFASQSR (94 aa)) constitute a propeptide, activation peptide. The region spanning 121–414 (TYHTLDEIYD…LGVLTIMEHT (294 aa)) is the Peptidase M14 domain. Zn(2+)-binding residues include H179 and E182. Substrate-binding positions include 179–182 (HSRE), R237, and 254–255 (NR). An intrachain disulfide couples C248 to C271. H306 is a Zn(2+) binding site. Substrate is bound by residues 307 to 308 (SY) and Y358. The active-site Proton donor/acceptor is E380.

It belongs to the peptidase M14 family. In terms of assembly, monomer. May form a complex with proelastase 2. Zn(2+) is required as a cofactor. Pancreas.

It is found in the secreted. The enzyme catalyses Release of a C-terminal amino acid, but little or no action with -Asp, -Glu, -Arg, -Lys or -Pro.. It catalyses the reaction leukotriene C4 + H2O = leukotriene F4 + glycine. Inhibited by interaction with the S.magnifica carboxypeptidase inhibitor SmCI. Functionally, carboxypeptidase that catalyzes the release of a C-terminal amino acid, but has little or no action with -Asp, -Glu, -Arg, -Lys or -Pro. Catalyzes the conversion of leukotriene C4 to leukotriene F4 via the hydrolysis of an amide bond. This chain is Carboxypeptidase A1 (CPA1), found in Bos taurus (Bovine).